Reading from the N-terminus, the 70-residue chain is uncharacterized protein (70 aa).

This is an uncharacterized protein from Methanocaldococcus jannaschii (strain ATCC 43067 / DSM 2661 / JAL-1 / JCM 10045 / NBRC 100440) (Methanococcus jannaschii).